Here is a 2283-residue protein sequence, read N- to C-terminus: MVLRNSGRRHPEPGADGEGSRDDGPSSSVSALKRLERSQWTDKMDLRFGFERLKEPGERTGWLINMHPTEILDEDKRLVSAVDYYFIQDDGSRFKVALPYMPYFYIAARKGCDREVSSFLSKKFQGKIAKLENVPKEDLDLPNHLVGLKRSYIKLSFHTVEDLVKVRKEISPAVKKNREQDHASDEYTTMLSSILQGGSVITDEDETSKKIADQLDNIVDMREYDVPYHIRLSIDLRIHVAHWYNVRFRGNAFPVEITRRDDLVERPDPVVLAFDIETTKLPLKFPDAETDQIMMISYMIDGQGYLITNREIVSEDIEDFEFTPKPEYEGPFCVFNEPDEVHLIQRWFEHIQETKPTIMVTYNGDFFDWPFVEARAAIHGLSMYQEIGFQKDSQGEYKAPQCIHMDCLRWVKRDSYLPVGSHNLKAAAKAKLGYDPVELDPEDMCRMATEQPQTLATYSVSDAVATYYLYMKYVHPFIFALCTIIPMEPDEVLRKGSGTLCEALLMVQAFHANIIFPNKQEQEFNKLTDDGHMLDAETYVGGHVEALESGVFRSDIPCRFRMNPAAFDFLLQRVEKTMRHAIEEEEKVPVEQATNFQEVCEQIKTKLTSLKDVPNRIECPLIYHLDVGAMYPNIILTNRLQPSAIVDEATCAACDFNKPGASCQRKMAWQWRGEFMPASRSEYHRIQHQLESEKFPPLFPEGPARAFHELSREEQAKYEKRRLADYCRKAYKKIHVTKVEERLTTICQRENSFYVDTVRAFRDRRYEFKGLHKVWKKKLSAAVEVGDASEVKRCKNMEILYDSLQLAHKCILNSFYGYVMRKGARWYSMEMAGIVCFTGANIITQARELIEQIGRPLELDTDGIWCVLPNSFPENFVIKTTNAKKPKLTISYPGAMLNIMVKEGFTNHQYQELTEPSSLTYVTHSENSIFFEVDGPYLAMILPASKEEGKKLKKRYAVFNEDGSLAELKGFEVKRRGELQLIKIFQSSVFEAFLKGSTLEEVYGSVAKVADYWLDVLYSKAANMPDSELFELISENRSMSRKLEDYGEQKSTSISTAKRLAEFLGDQMVKDAGLSCRYIISRKPEGSPVTERAIPLAIFQAEPTVRKHFLRKWLKSSSLQDFDIRTILDWDYYIERLGSAIQKIITIPAALQQVKNPVPRVKHPDWLHKKLLEKNDIYKQKKISELFVLEGKRQIVMAQASENSLSLCTPDMEDIGLTKPHHSTVPVATKRKRVWETQKESQDIALTVPWQEVLGQPPSLGTTQEEWLVWLQFHKKKWQLQAQQRLALRKKQRLESAEDMPRLGPIREGPSTGLGSFLRRTARSIMDLPWQIIQISETRQAGLFRLWAIIGNDLHCIKLSIPRVFYVNQRVAKAEDGPAYRKVNRALPRSNIVYNLYEYSVPEDMYQEHINEINTELSVPDIEGVYETQVPLLFRALVQLGCVCVVNKQLTRHLSGWEAETFALEHLEMRSLAQFSYLEPGSIRHIYLYHHTQGHKALFGVFIPSQRRASVFVLDTVRSNQMPGLSALYSSEHSLLLDKVDPKLLPPPKHTFEVRAETNLKTICRAIQRFLLAYKEERRGPTLIAVQSSWELCRLTSEIPVLEEFPLVPIRVADKISYAVLDWQRHGARRMIRHYLNLDLCLSQAFEMSRYFHIPVGNLPEDISTFGSDLFFARHLQHHNHLLWLSPTSRPDLGGKEADDNRLVMEFDDRATVEINSSGCYSTVCVELDIQNLAVNTILQSHHVNDMEGAGSMGISFDVIQQASLEDMVTGNQAASALANYDETALCSSTFRILKSMVVGWVKEITQYHNIYADNQVMHFYRWLQSPCSLLHDPALHRTLHNMMKKLFLQLIAEFKRLGSSVVYANFNRIILCTKKRRIEDALAYVEYITNSIHSKEIFHSLTISFSRCWEFLLWMDPSNYGGIKGKVPSSIHCGQVKEQDSQAREETDEEEEDKEKDEEEEGMGESEVEDLLENNWNILQFLPQAASCQSYFLMIVSAYIVAVYQSMKEELRHSAPGSTPVKRKGASQFSQESEGATGSLPGMITFSQDYVANELTQSFFTITQKIQKKVTGSRNTTEPSEMFPVLPGSHLLLNNPALEFIKYVCKVLSLDTNITNQVNKLNRDLLRLVDVGEFSEEAQFRDPCHSYVLPEVICHSCNFCRDLDLCKDSSFSQDGAILPQWLCSNCQAPYDSSAIESALVEALQRKLMAFTLQDLVCLKCRGMKETHMPVYCSCAGDFTLTIRTEVFMEQIRIFQNIAKYYSMSYLQETIEWLLQTSPVSNC.

A disordered region spans residues M1 to L32. Basic and acidic residues predominate over residues R9 to G24. A phosphoserine mark is found at S1184, S1296, and S1316. 2 disordered regions span residues G1935 to E1968 and H2014 to L2041. The segment covering Q1936–E1946 has biased composition (basic and acidic residues). Residues E1947–E1968 show a composition bias toward acidic residues. Residues S2028–A2037 are compositionally biased toward polar residues. 4 residues coordinate Zn(2+): C2155, C2158, C2184, and C2187. A CysA-type zinc finger spans residues C2155–C2187. C2218, C2221, C2233, and C2235 together coordinate [4Fe-4S] cluster. The short motif at C2218 to C2235 is the CysB motif element.

Belongs to the DNA polymerase type-B family. As to quaternary structure, component of the DNA polymerase epsilon complex consisting of four subunits: the catalytic subunit POLE and the accessory subunits POLE2, POLE3 and POLE4. Interacts with RAD17 and TOPBP1. [4Fe-4S] cluster serves as cofactor.

It is found in the nucleus. It catalyses the reaction DNA(n) + a 2'-deoxyribonucleoside 5'-triphosphate = DNA(n+1) + diphosphate. Functionally, catalytic component of the DNA polymerase epsilon complex. Participates in chromosomal DNA replication. Required during synthesis of the leading DNA strands at the replication fork and binds at/or near replication origins and moves along DNA with the replication fork. Has 3'-5' proofreading exonuclease activity that corrects errors arising during DNA replication. It is also involved in DNA synthesis during DNA repair. This Mus musculus (Mouse) protein is DNA polymerase epsilon catalytic subunit A (Pole).